The primary structure comprises 962 residues: Villin-5 (962 aa).

6 Gelsolin-like repeats span residues 29–79 (FKPV…DEAG), 150–190 (VRVK…QERA), 262–305 (GQTD…DQRK), 396–453 (LQVW…EDRA), 534–574 (MQAI…EDQE), and 636–677 (LKAT…KKKP). The segment at 749–785 (KPKRRVPAYSSRSTVPDKSQPRSRSMTFSPDRARVRG) is disordered. The span at 758–776 (SSRSTVPDKSQPRSRSMTF) shows a compositional bias: polar residues. 2 positions are modified to phosphoserine: Ser777 and Ser787. The span at 845–862 (EKPTPTSQEPPTSPSSSE) shows a compositional bias: low complexity. A disordered region spans residues 845–917 (EKPTPTSQEP…LKTDSEDPVS (73 aa)). Residues 863-875 (ATNQAEAPKSTSE) are compositionally biased toward polar residues. Ser883 carries the phosphoserine modification. Over residues 889–898 (SKEEEAEEES) the composition is skewed to acidic residues. Positions 897 to 962 (ESSLPTFPYE…NKLKMSVNLF (66 aa)) constitute an HP domain.

The protein belongs to the villin/gelsolin family. As to expression, ubiquitous, but expressed preferentially in pollen and stamens.

It is found in the cytoplasm. The protein resides in the cytoskeleton. Functionally, major actin filament stabilizing factor and regulator of actin dynamics. Binds actin and actin filament bundles in a Ca(2+)-insensitive manner, but caps the barbed end of actin filaments and is able to sever them in a calcium-dependent manner. Required for the construction of actin collars in pollen tubes. Acts synergistically with VLN2 (AC O81644) to regulate polarized pollen tube growth. The polypeptide is Villin-5 (Arabidopsis thaliana (Mouse-ear cress)).